Consider the following 366-residue polypeptide: Quinolinate synthase (366 aa).

Iminosuccinate-binding residues include His-44 and Ser-61. Cys-108 serves as a coordination point for [4Fe-4S] cluster. Iminosuccinate is bound by residues 139 to 141 (YVN) and Ser-160. Cys-228 is a binding site for [4Fe-4S] cluster. Iminosuccinate contacts are provided by residues 254-256 (HPE) and Thr-271. Cys-318 is a [4Fe-4S] cluster binding site.

Belongs to the quinolinate synthase family. Type 3 subfamily. [4Fe-4S] cluster is required as a cofactor.

Its subcellular location is the cytoplasm. It catalyses the reaction iminosuccinate + dihydroxyacetone phosphate = quinolinate + phosphate + 2 H2O + H(+). It participates in cofactor biosynthesis; NAD(+) biosynthesis; quinolinate from iminoaspartate: step 1/1. Catalyzes the condensation of iminoaspartate with dihydroxyacetone phosphate to form quinolinate. This is Quinolinate synthase from Staphylococcus carnosus (strain TM300).